Consider the following 293-residue polypeptide: Bifunctional protein FolD (293 aa).

Residues 164-166 (GRS), serine 193, and threonine 234 each bind NADP(+).

Belongs to the tetrahydrofolate dehydrogenase/cyclohydrolase family. Homodimer.

The catalysed reaction is (6R)-5,10-methylene-5,6,7,8-tetrahydrofolate + NADP(+) = (6R)-5,10-methenyltetrahydrofolate + NADPH. The enzyme catalyses (6R)-5,10-methenyltetrahydrofolate + H2O = (6R)-10-formyltetrahydrofolate + H(+). The protein operates within one-carbon metabolism; tetrahydrofolate interconversion. Its function is as follows. Catalyzes the oxidation of 5,10-methylenetetrahydrofolate to 5,10-methenyltetrahydrofolate and then the hydrolysis of 5,10-methenyltetrahydrofolate to 10-formyltetrahydrofolate. In Bacteroides fragilis (strain ATCC 25285 / DSM 2151 / CCUG 4856 / JCM 11019 / LMG 10263 / NCTC 9343 / Onslow / VPI 2553 / EN-2), this protein is Bifunctional protein FolD.